A 211-amino-acid chain; its full sequence is Large ribosomal subunit protein uL3 (211 aa).

Residues 126 to 147 (HGQSRGPMAHGSRYHRRPGSMG) are disordered.

This sequence belongs to the universal ribosomal protein uL3 family. As to quaternary structure, part of the 50S ribosomal subunit. Forms a cluster with proteins L14 and L19.

Its function is as follows. One of the primary rRNA binding proteins, it binds directly near the 3'-end of the 23S rRNA, where it nucleates assembly of the 50S subunit. In Geobacillus thermodenitrificans (strain NG80-2), this protein is Large ribosomal subunit protein uL3.